Reading from the N-terminus, the 229-residue chain is DNA mismatch repair protein MutH (229 aa).

The protein belongs to the MutH family.

The protein resides in the cytoplasm. In terms of biological role, sequence-specific endonuclease that cleaves unmethylated GATC sequences. It is involved in DNA mismatch repair. This is DNA mismatch repair protein MutH from Escherichia coli O45:K1 (strain S88 / ExPEC).